Reading from the N-terminus, the 406-residue chain is Tryptophan synthase beta chain (406 aa).

At Lys99 the chain carries N6-(pyridoxal phosphate)lysine.

Belongs to the TrpB family. As to quaternary structure, tetramer of two alpha and two beta chains. It depends on pyridoxal 5'-phosphate as a cofactor.

It catalyses the reaction (1S,2R)-1-C-(indol-3-yl)glycerol 3-phosphate + L-serine = D-glyceraldehyde 3-phosphate + L-tryptophan + H2O. Its pathway is amino-acid biosynthesis; L-tryptophan biosynthesis; L-tryptophan from chorismate: step 5/5. Its function is as follows. The beta subunit is responsible for the synthesis of L-tryptophan from indole and L-serine. Essential for production of nod factors and establishment of symbiosis. This is Tryptophan synthase beta chain from Rhizobium etli (strain ATCC 51251 / DSM 11541 / JCM 21823 / NBRC 15573 / CFN 42).